A 535-amino-acid polypeptide reads, in one-letter code: Dipeptide-binding protein (535 aa).

A signal peptide spans 1-28 (MRISLKKSGMLKLGLSLVAMTVAASVQA). Cysteine 34 and cysteine 262 are joined by a disulfide. Glycyl-L-leucine-binding positions include 48-50 (TSG), 383-385 (RPY), and 433-436 (WTGD). Cysteine 450 and cysteine 463 form a disulfide bridge.

It belongs to the bacterial solute-binding protein 5 family. The complex is composed of two ATP-binding proteins (DppD and DppF), two transmembrane proteins (DppB and DppC) and a solute-binding protein (DppA).

Its subcellular location is the periplasm. Heme binding is inhibited by dipeptide. Functionally, part of the ABC transporter DppABCDF involved in dipeptide transport. Binds dipeptides and accepts a wide range of side chains, including small neutral, bulky hydrophobic, and positively and negatively charged groups. Tripeptides are poor substrates. DppA alone controls the specificity of the Dpp transporter. In addition, plays a role in chemotaxis toward peptides via interaction with the chemotaxis protein Tap. Binds heme. When a foreign outer membrane heme receptor is expressed in E.coli, DppABCDF can also transport heme and its precursor, 5-aminolevulinic acid (ALA), from the periplasm into the cytoplasm. The sequence is that of Dipeptide-binding protein from Escherichia coli (strain K12).